A 201-amino-acid chain; its full sequence is E3 ubiquitin-protein ligase LAP (201 aa).

Residues 1–92 (MSTIVDMVDV…RDCHDSLLVN (92 aa)) are Cytoplasmic-facing. An RING-CH-type zinc finger spans residues 9 to 69 (DVSLVDKCCW…AICETPYNVK (61 aa)). Cysteine 17, cysteine 20, cysteine 31, cysteine 33, histidine 41, cysteine 44, cysteine 59, and cysteine 62 together coordinate Zn(2+). A helical membrane pass occupies residues 93–113 (LPLCLIVGGISTYTLVSVEII). Residues 114-123 (KLMESEETSE) lie on the Lumenal side of the membrane. Residues 124-144 (LTKVFLVTSFLGPFIVTVLSA) traverse the membrane as a helical segment. The Cytoplasmic portion of the chain corresponds to 145–201 (LRTCIDCRTYFLTTRKRNTIHTLQELEDDDDDDDDDDDDDDEEYADAVEEIIIGPSN). Residues 168-188 (QELEDDDDDDDDDDDDDDEEY) form a disordered region. Residues 169 to 188 (ELEDDDDDDDDDDDDDDEEY) are compositionally biased toward acidic residues.

This sequence belongs to the poxviridae LAP protein family.

Its subcellular location is the host membrane. The protein localises to the host Golgi apparatus. It localises to the host trans-Golgi network membrane. The protein resides in the host early endosome membrane. It carries out the reaction S-ubiquitinyl-[E2 ubiquitin-conjugating enzyme]-L-cysteine + [acceptor protein]-L-lysine = [E2 ubiquitin-conjugating enzyme]-L-cysteine + N(6)-ubiquitinyl-[acceptor protein]-L-lysine.. Its function is as follows. E3 ubiquitin-protein ligase which promotes ubiquitination and subsequent degradation of host MHC-I and CD4 molecules, presumably to prevent lysis of infected cells by cytotoxic T-lymphocytes and NK cell. Binds target molecules through transmembrane interaction. The result of this ubiquitination is the enhancement of the endocytosis of the target chain and the delivery to the lysosome, where it is proteolytically destroyed. The polypeptide is E3 ubiquitin-protein ligase LAP (Oryctolagus cuniculus (Rabbit)).